The sequence spans 252 residues: MRVLLSNDDGFHANGIKALKEIVIKSGIASEIWVVAPLNNCSGSGRSVGLNVKVQVSKVSDTEFIVDSTPSTSVFLALRKIMNYKPDLILSGINHGVNIGNDVWYSGTVAAAAEGAAINIPSIAISQEYDNKSGEINWVNPQRFLKQIIEMLVNVSFWNKSTVMNVNFPLMPAKGIKFTDQGKYVPCNEIEKNESSDDSNVSYTITRITPNKKNRAQCDGSIKAIDEGYITITPLKFDMTDFDVLTSLNSLK.

A divalent metal cation is bound by residues Asp-8, Asp-9, Ser-42, and Asn-94.

Belongs to the SurE nucleotidase family. It depends on a divalent metal cation as a cofactor.

It is found in the cytoplasm. The catalysed reaction is a ribonucleoside 5'-phosphate + H2O = a ribonucleoside + phosphate. Functionally, nucleotidase that shows phosphatase activity on nucleoside 5'-monophosphates. This is 5'-nucleotidase SurE from Ehrlichia ruminantium (strain Gardel).